Consider the following 221-residue polypeptide: Probable septum site-determining protein MinC (221 aa).

It belongs to the MinC family. Interacts with MinD and FtsZ.

Functionally, cell division inhibitor that blocks the formation of polar Z ring septums. Rapidly oscillates between the poles of the cell to destabilize FtsZ filaments that have formed before they mature into polar Z rings. Prevents FtsZ polymerization. This is Probable septum site-determining protein MinC from Shewanella sp. (strain ANA-3).